The primary structure comprises 619 residues: Polyadenylate-binding protein 1-like (619 aa).

RRM domains lie at 11-89 (ASLY…WSQR), 99-175 (GNIF…HFKS), 191-268 (TNIY…RAQK), and 294-370 (VNLY…LAQR). A disordered region spans residues 431 to 458 (PAPRWTSQPPRPSSAYPPGASMVRPPVV). A PABC domain is found at 533 to 610 (QEPLTASMLA…AVAVLQAHQA (78 aa)).

It belongs to the polyadenylate-binding protein type-1 family. Expressed in ovary and testis. Also expressed in pancreas, liver and thymus, and at lower levels in other somatic tissues including brain and lung.

Its subcellular location is the cytoplasm. In terms of biological role, poly(A)-binding protein involved in oocyte maturation and early embryo development. It is required for cytosolic mRNA polyadenylation and translational activation of maternally stored mRNA in oocytes. The chain is Polyadenylate-binding protein 1-like from Homo sapiens (Human).